Consider the following 355-residue polypeptide: 3-dehydroquinate synthase (355 aa).

NAD(+)-binding positions include 71 to 76, 105 to 109, 129 to 130, K142, and K151; these read EGEERK, GVVGD, and TS. The Zn(2+) site is built by E184, H246, and H263.

This sequence belongs to the sugar phosphate cyclases superfamily. Dehydroquinate synthase family. Requires Co(2+) as cofactor. Zn(2+) serves as cofactor. It depends on NAD(+) as a cofactor.

The protein resides in the cytoplasm. The enzyme catalyses 7-phospho-2-dehydro-3-deoxy-D-arabino-heptonate = 3-dehydroquinate + phosphate. It participates in metabolic intermediate biosynthesis; chorismate biosynthesis; chorismate from D-erythrose 4-phosphate and phosphoenolpyruvate: step 2/7. In terms of biological role, catalyzes the conversion of 3-deoxy-D-arabino-heptulosonate 7-phosphate (DAHP) to dehydroquinate (DHQ). This is 3-dehydroquinate synthase from Streptococcus pneumoniae (strain ATCC 700669 / Spain 23F-1).